A 256-amino-acid chain; its full sequence is ATG8-interacting protein 1 (256 aa).

The AIM (Atg8-family-interacting motif) signature appears at 14–17 (WEVV). A helical membrane pass occupies residues 181–200 (ANAIWSLFFAAAVTGLVVLG). Residues 208–211 (WQVL) carry the AIM (Atg8-family-interacting motif) motif.

In terms of assembly, interacts with ATG8F. Interacts with ATG8H. Interacts with APE1 and PSBS/NPQ4.

The protein resides in the endoplasmic reticulum membrane. Its subcellular location is the membrane. It localises to the plastid. The protein localises to the chloroplast membrane. Involved in a special stress-induced plastid-to-vacuole protein trafficking pathway. Interacts with ATG8F in plastid bodies to subsequently enable their delivery to the vacuole by an autophagic pathway. Interacts with the plastid proteins APE1 and PSBS/NPQ4 and may recruit them as cargo into plastid bodies that may be recognized by the autophagy machinery for degradation in the vacuole. Involved in the alleviation of damage caused by salt stress during plant development, probably through its involvement in plastid-to-vacuole and ER-to-vacuole trafficking. Plays a role in seed germination in response to exogenous abscisic acid (ABA) treatment. The protein is ATG8-interacting protein 1 of Arabidopsis thaliana (Mouse-ear cress).